The following is a 305-amino-acid chain: tRNA dimethylallyltransferase (305 aa).

Residue 11–18 (GPTAVGKT) coordinates ATP. 13 to 18 (TAVGKT) lines the substrate pocket. The interval 36–39 (DSMQ) is interaction with substrate tRNA.

Belongs to the IPP transferase family. In terms of assembly, monomer. Mg(2+) serves as cofactor.

The enzyme catalyses adenosine(37) in tRNA + dimethylallyl diphosphate = N(6)-dimethylallyladenosine(37) in tRNA + diphosphate. Its function is as follows. Catalyzes the transfer of a dimethylallyl group onto the adenine at position 37 in tRNAs that read codons beginning with uridine, leading to the formation of N6-(dimethylallyl)adenosine (i(6)A). In Listeria monocytogenes serovar 1/2a (strain ATCC BAA-679 / EGD-e), this protein is tRNA dimethylallyltransferase.